Reading from the N-terminus, the 196-residue chain is Recombination protein RecR (196 aa).

A C4-type zinc finger spans residues 56–71 (CPVCGGLDSQQPCMIC). Residues 78–172 (PLICVVETVA…SVTRLAQGVP (95 aa)) enclose the Toprim domain.

Belongs to the RecR family.

May play a role in DNA repair. It seems to be involved in an RecBC-independent recombinational process of DNA repair. It may act with RecF and RecO. This chain is Recombination protein RecR, found in Acidiphilium cryptum (strain JF-5).